The following is a 101-amino-acid chain: Small ribosomal subunit protein uS10 (101 aa).

Belongs to the universal ribosomal protein uS10 family. As to quaternary structure, part of the 30S ribosomal subunit.

Involved in the binding of tRNA to the ribosomes. The polypeptide is Small ribosomal subunit protein uS10 (Ureaplasma parvum serovar 3 (strain ATCC 27815 / 27 / NCTC 11736)).